Reading from the N-terminus, the 241-residue chain is Purine nucleoside phosphorylase DeoD-type 1 (241 aa).

A purine D-ribonucleoside is bound at residue His5. Phosphate is bound by residues Gly21, Arg25, Arg44, and 88 to 91 (RVGS). A purine D-ribonucleoside-binding positions include 180–182 (EME) and 204–205 (SD). Asp205 (proton donor) is an active-site residue.

It belongs to the PNP/UDP phosphorylase family. As to quaternary structure, homohexamer; trimer of homodimers.

It carries out the reaction a purine D-ribonucleoside + phosphate = a purine nucleobase + alpha-D-ribose 1-phosphate. The enzyme catalyses a purine 2'-deoxy-D-ribonucleoside + phosphate = a purine nucleobase + 2-deoxy-alpha-D-ribose 1-phosphate. In terms of biological role, catalyzes the reversible phosphorolytic breakdown of the N-glycosidic bond in the beta-(deoxy)ribonucleoside molecules, with the formation of the corresponding free purine bases and pentose-1-phosphate. This is Purine nucleoside phosphorylase DeoD-type 1 from Photobacterium profundum (strain SS9).